A 97-amino-acid polypeptide reads, in one-letter code: Large ribosomal subunit protein uL23 (97 aa).

Belongs to the universal ribosomal protein uL23 family. Part of the 50S ribosomal subunit. Contacts protein L29, and trigger factor when it is bound to the ribosome.

Functionally, one of the early assembly proteins it binds 23S rRNA. One of the proteins that surrounds the polypeptide exit tunnel on the outside of the ribosome. Forms the main docking site for trigger factor binding to the ribosome. The protein is Large ribosomal subunit protein uL23 of Lactiplantibacillus plantarum (strain ATCC BAA-793 / NCIMB 8826 / WCFS1) (Lactobacillus plantarum).